Reading from the N-terminus, the 1796-residue chain is Non-reducing polyketide synthase nscA (1796 aa).

The N-terminal acylcarrier protein transacylase domain (SAT) stretch occupies residues 18-256; the sequence is DDLKDLFRRL…PLPVYDGLCH (239 aa). Positions 392 to 825 constitute a Ketosynthase family 3 (KS3) domain; the sequence is SSKLAIVGMA…GGNTTLLLED (434 aa). Catalysis depends on for beta-ketoacyl synthase activity residues C565, H700, and H743. A malonyl-CoA:ACP transacylase (MAT) domain region spans residues 931–1251; the sequence is FTGQGAYYSG…SLVTLHLAGL (321 aa). The tract at residues 1317–1636 is product template (PT) domain; it reads TSLVHQITAE…RLLMDRFFSP (320 aa). Positions 1321-1457 are N-terminal hotdog fold; sequence HQITAETVEA…ATVRFEDPVA (137 aa). In terms of domain architecture, PKS/mFAS DH spans 1321–1631; sequence HQITAETVEA…FRRVPRLLMD (311 aa). H1353 acts as the Proton acceptor; for dehydratase activity in catalysis. The tract at residues 1485 to 1631 is C-terminal hotdog fold; the sequence is ASRLSKPLAY…FRRVPRLLMD (147 aa). The Proton donor; for dehydratase activity role is filled by D1542. Residues 1688–1720 are disordered; the sequence is TPESTPPLAPSSESSTPKESPIATPPESERADP. The span at 1697–1708 shows a compositional bias: low complexity; it reads PSSESSTPKESP. Residues 1719–1796 form the Carrier domain; sequence DPMDNMVSQC…EMTAWIEEYC (78 aa). S1756 carries the post-translational modification O-(pantetheine 4'-phosphoryl)serine.

It depends on pantetheine 4'-phosphate as a cofactor.

The protein operates within secondary metabolite biosynthesis. Functionally, non-reducing polyketide synthase; part of the gene cluster that mediates the biosynthesis of neosartoricin B, a prenylated anthracenone that probably exhibits T-cell antiproliferative activity, suggestive of a physiological role as an immunosuppressive agent. The non-reducing polyketide synthase nscA probably synthesizes and cyclizes the decaketide backbone. The hydrolase nscB then mediates the product release through hydrolysis followed by spontaneous decarboxylation. The prenyltransferase nscD catalyzes the addition of the dimethylallyl group to the aromatic C5. The FAD-dependent monooxygenase nscC is then responsible for the stereospecific hydroxylation at C2. Neosartoricin B can be converted into two additional compounds neosartoricins C and D. Neosartoricin C is a spirocyclic compound that is cyclized through the attack of C3 hydroxyl on C14, followed by dehydration. On the other hand, neosartoricin D is a further cyclized compound in which attack of C2 on C14 in neosartoricin C results in the formation of the acetal-containing dioxabicyclo-octanone ring. Both of these compounds are novel and possibly represent related metabolites of the gene cluster. The protein is Non-reducing polyketide synthase nscA of Arthroderma otae (strain ATCC MYA-4605 / CBS 113480) (Microsporum canis).